Consider the following 144-residue polypeptide: Large ribosomal subunit protein uL15 (144 aa).

The disordered stretch occupies residues 1-48 (MIKLESLQDPSPRKRRTKLLGRGPSSGHGKTSCRGHKGDGSRSGYKRR).

Belongs to the universal ribosomal protein uL15 family. In terms of assembly, part of the 50S ribosomal subunit.

Binds to the 23S rRNA. This Chlamydia caviae (strain ATCC VR-813 / DSM 19441 / 03DC25 / GPIC) (Chlamydophila caviae) protein is Large ribosomal subunit protein uL15.